A 294-amino-acid polypeptide reads, in one-letter code: Acetyl-coenzyme A carboxylase carboxyl transferase subunit beta (294 aa).

Positions 25–294 (IWTKCDNCGQ…PKVDYRHCVE (270 aa)) constitute a CoA carboxyltransferase N-terminal domain. 4 residues coordinate Zn(2+): cysteine 29, cysteine 32, cysteine 48, and cysteine 51. The C4-type zinc finger occupies 29 to 51 (CDNCGQLLYKKELERNLEVCPKC).

It belongs to the AccD/PCCB family. Acetyl-CoA carboxylase is a heterohexamer composed of biotin carboxyl carrier protein (AccB), biotin carboxylase (AccC) and two subunits each of ACCase subunit alpha (AccA) and ACCase subunit beta (AccD). Requires Zn(2+) as cofactor.

It localises to the cytoplasm. The enzyme catalyses N(6)-carboxybiotinyl-L-lysyl-[protein] + acetyl-CoA = N(6)-biotinyl-L-lysyl-[protein] + malonyl-CoA. Its pathway is lipid metabolism; malonyl-CoA biosynthesis; malonyl-CoA from acetyl-CoA: step 1/1. In terms of biological role, component of the acetyl coenzyme A carboxylase (ACC) complex. Biotin carboxylase (BC) catalyzes the carboxylation of biotin on its carrier protein (BCCP) and then the CO(2) group is transferred by the transcarboxylase to acetyl-CoA to form malonyl-CoA. This Blochmanniella pennsylvanica (strain BPEN) protein is Acetyl-coenzyme A carboxylase carboxyl transferase subunit beta.